A 443-amino-acid polypeptide reads, in one-letter code: Phosphoglucosamine mutase (443 aa).

S102 functions as the Phosphoserine intermediate in the catalytic mechanism. The Mg(2+) site is built by S102, D241, D243, and D245. S102 is modified (phosphoserine).

Belongs to the phosphohexose mutase family. Mg(2+) is required as a cofactor. In terms of processing, activated by phosphorylation.

It catalyses the reaction alpha-D-glucosamine 1-phosphate = D-glucosamine 6-phosphate. Functionally, catalyzes the conversion of glucosamine-6-phosphate to glucosamine-1-phosphate. The chain is Phosphoglucosamine mutase from Polaromonas sp. (strain JS666 / ATCC BAA-500).